Here is a 129-residue protein sequence, read N- to C-terminus: Small ribosomal subunit protein uS8 (129 aa).

This sequence belongs to the universal ribosomal protein uS8 family. In terms of assembly, part of the 30S ribosomal subunit. Contacts proteins S5 and S12.

Its function is as follows. One of the primary rRNA binding proteins, it binds directly to 16S rRNA central domain where it helps coordinate assembly of the platform of the 30S subunit. This is Small ribosomal subunit protein uS8 from Dichelobacter nodosus (strain VCS1703A).